The primary structure comprises 212 residues: MKKFEQLRGIVAPLDRANIDTDAIIPKQFLKSIKRSGFGQNLFDEWRYLDYGEPGKDAASRQLNPDFILNQSRYQGAKILVTRDNFGCGSSREHAPWALQDYGFAVIIAPSFADIFYNNCFKIGLLPIVLESPVVDRLIRDALTVDGYQLEINLEAQTVMALSGETYWFEVDHFRKHCLLNGLDEIGLTLQHADRIRKFEINRRNEQPWLFL.

It belongs to the LeuD family. LeuD type 1 subfamily. As to quaternary structure, heterodimer of LeuC and LeuD.

It carries out the reaction (2R,3S)-3-isopropylmalate = (2S)-2-isopropylmalate. It participates in amino-acid biosynthesis; L-leucine biosynthesis; L-leucine from 3-methyl-2-oxobutanoate: step 2/4. In terms of biological role, catalyzes the isomerization between 2-isopropylmalate and 3-isopropylmalate, via the formation of 2-isopropylmaleate. This is 3-isopropylmalate dehydratase small subunit from Nitrosomonas eutropha (strain DSM 101675 / C91 / Nm57).